The sequence spans 78 residues: Large ribosomal subunit protein eL20 (78 aa).

The protein belongs to the eukaryotic ribosomal protein eL20 family. In terms of assembly, part of the 50S ribosomal subunit. Binds 23S rRNA.

This is Large ribosomal subunit protein eL20 from Pyrobaculum aerophilum (strain ATCC 51768 / DSM 7523 / JCM 9630 / CIP 104966 / NBRC 100827 / IM2).